Here is a 240-residue protein sequence, read N- to C-terminus: MGEGKGENKWGAAQMSNNPIRNKDFKVFGLVEKIYEQKGEFVKLFAEIKKKLYSMSIEQLLLMPSYARSKLKDEYGHIEFEYAGYGDRIVIVKLEDPWTDDTNKRQGKTAFLVYFSYQTSKPLVPAQITYKIRSIFKTMKELNQKGYRVFPALFANSITPGALKILQNPKINIRFFSDVNDLLNWIYSKVLNRLKKIVEIAKFTLKFDKIFTFLKTIIAGLGYEVPSDILMAWASKPVRP.

This is an uncharacterized protein from Acidianus two-tailed virus (ATV).